A 346-amino-acid chain; its full sequence is MSRVLQDAEFISLNSNDVKVNKGGCAAVATWIKEKLDSLGPQFAEWQNHELHPKTRDVSTLDWIFLVDILNFSFWSDVDVEDSGKHSKRFSIEYKGKLYTGYWSLCAAINKALDAGIPITSPAFYADEKQCPDTLIASVFDSATVEKIPLLEERIRIMRASGRVLVDSYHGSYCGLLKKCHNQAQRLIKLLLADFPDFRDVSVYKGRECYMLKRAQILVAETWACFQGQNYGRFDDIDSITMFADYRVPQILWQLGCLSYSSDFKKRLLKNELIAHNDPMEIEMRGCSIWAVEKILQNINRKDVNAITIDFFLWDLAKEWQAKGYKPSTQVDEVTIPCIRVRSIYY.

Queuine is bound by residues histidine 49, phenylalanine 243, aspartate 245, aspartate 310, and aspartate 315. Aspartate 245 functions as the Nucleophile or transition state stabilizer in the catalytic mechanism.

This sequence belongs to the QNG1 protein family.

It carries out the reaction queuosine 5'-phosphate + H2O = queuine + D-ribose 5-phosphate. Catalyzes the hydrolysis of queuosine 5'-phosphate, releasing the nucleobase queuine (q). Is required for salvage of queuine from exogenous queuosine (Q) that is imported and then converted to queuosine 5'-phosphate intracellularly. The protein is Queuosine 5'-phosphate N-glycosylase/hydrolase of Schizosaccharomyces pombe (strain 972 / ATCC 24843) (Fission yeast).